Consider the following 68-residue polypeptide: Antimicrobial peptide Eval655 (68 aa).

The N-terminal stretch at 1–23 (MKTQFVVLLVALVLLQMFAQSEA) is a signal peptide. Residue leucine 36 is modified to Leucine amide. Positions 37-68 (GKRGLKNLDDFDDIFDDDLSSADLEFLKQLMR) are excised as a propeptide.

Belongs to the non-disulfide-bridged peptide (NDBP) superfamily. Short antimicrobial peptide (group 4) family. As to expression, expressed by the venom gland.

It is found in the secreted. In terms of biological role, probable antimicrobial peptide. Shows low inhibitory activity against herpes simplex virus type 1 (HSV-1). This is Antimicrobial peptide Eval655 from Euscorpiops validus (Scorpion).